The chain runs to 403 residues: Alkaline protease 1 (403 aa).

Residues 1–21 (MHSFKRSLLLLGALLPAVFGA) form the signal peptide. Positions 22-124 (PVEPRRAAEK…QIWYIDALTS (103 aa)) are excised as a propeptide. An Inhibitor I9 domain is found at 35-119 (KYIVTFKSGL…HVEEDQIWYI (85 aa)). The 275-residue stretch at 129–403 (PWGLGAISHK…NLLAYNGADE (275 aa)) folds into the Peptidase S8 domain. Catalysis depends on charge relay system residues Asp161 and His192. Asn252 is a glycosylation site (N-linked (GlcNAc...) asparagine). Ser348 acts as the Charge relay system in catalysis.

The protein belongs to the peptidase S8 family.

Its subcellular location is the secreted. The catalysed reaction is Hydrolysis of proteins with broad specificity, and of Bz-Arg-OEt &gt; Ac-Tyr-OEt. Does not hydrolyze peptide amides.. Its function is as follows. Secreted alkaline protease that allows assimilation of proteinaceous substrates. The chain is Alkaline protease 1 (alp1) from Emericella nidulans (strain FGSC A4 / ATCC 38163 / CBS 112.46 / NRRL 194 / M139) (Aspergillus nidulans).